The primary structure comprises 2082 residues: Autophagy-related protein 2 (2082 aa).

Disordered stretches follow at residues Ser108–Pro130, Glu144–Gly175, Thr285–Ala343, Thr365–Asn435, Thr462–Asp527, Arg580–Ser636, Ser662–Asp702, Ser912–Ser943, Asp1435–Asn1454, and Gly2062–His2082. The span at Gln111–Val126 shows a compositional bias: basic and acidic residues. Composition is skewed to polar residues over residues Ala152 to His162 and Pro311 to Ile329. 2 stretches are compositionally biased toward basic and acidic residues: residues Ile397–Asp430 and Gln489–Ala500. A compositionally biased stretch (low complexity) spans Ser503 to Ser522. 3 stretches are compositionally biased toward basic and acidic residues: residues Asn588–Thr597, Arg622–Ser633, and His690–Asp702. A compositionally biased stretch (basic and acidic residues) spans Ser2070–His2082.

The protein belongs to the ATG2 family.

The protein resides in the preautophagosomal structure membrane. It localises to the endoplasmic reticulum membrane. It carries out the reaction a 1,2-diacyl-sn-glycero-3-phosphocholine(in) = a 1,2-diacyl-sn-glycero-3-phosphocholine(out). The catalysed reaction is a 1,2-diacyl-sn-glycero-3-phospho-L-serine(in) = a 1,2-diacyl-sn-glycero-3-phospho-L-serine(out). It catalyses the reaction a 1,2-diacyl-sn-glycero-3-phosphoethanolamine(in) = a 1,2-diacyl-sn-glycero-3-phosphoethanolamine(out). Its function is as follows. Lipid transfer protein required for autophagosome completion and peroxisome degradation. Tethers the edge of the isolation membrane (IM) to the endoplasmic reticulum (ER) and mediates direct lipid transfer from ER to IM for IM expansion. Atg2 binds to the ER exit site (ERES), which is the membrane source for autophagosome formation, using basic residues in its N-terminal region (NR) and to the expanding edge of the IM through its C-terminal region. The latter binding is assisted by an atg18-PtdIns3P interaction. Atg2 then extracts phospholipids from the membrane source using its NR and transfers them to atg9 to the IM through its predicted beta-sheet-rich structure for membrane expansion. This Aspergillus terreus (strain NIH 2624 / FGSC A1156) protein is Autophagy-related protein 2 (atg2).